Here is a 445-residue protein sequence, read N- to C-terminus: Phosphoglucosamine mutase (445 aa).

The Phosphoserine intermediate role is filled by serine 102. Serine 102, aspartate 241, aspartate 243, and aspartate 245 together coordinate Mg(2+). At serine 102 the chain carries Phosphoserine.

This sequence belongs to the phosphohexose mutase family. The cofactor is Mg(2+). Post-translationally, activated by phosphorylation.

The catalysed reaction is alpha-D-glucosamine 1-phosphate = D-glucosamine 6-phosphate. Its function is as follows. Catalyzes the conversion of glucosamine-6-phosphate to glucosamine-1-phosphate. This Edwardsiella ictaluri (strain 93-146) protein is Phosphoglucosamine mutase.